We begin with the raw amino-acid sequence, 147 residues long: SPI-1 type 3 secretion system pilotin (147 aa).

An N-terminal signal peptide occupies residues 1-15 (MKKFYSCLPVFLLIG). Cysteine 16 is lipidated: N-palmitoyl cysteine. Cysteine 16 is lipidated: S-diacylglycerol cysteine.

It belongs to the InvH family.

The protein localises to the cell outer membrane. Functionally, involved in the synthesis of the type III secretion system (T3SS), also called injectisome, which is used to inject bacterial effector proteins into eukaryotic host cells. Pilot protein that is required for the proper localization of the secretin InvG/SctC in the outer membrane. Necessary for efficient adherence and entry of these organisms into cultured epithelial cells. The polypeptide is SPI-1 type 3 secretion system pilotin (Salmonella typhimurium (strain SL1344)).